A 390-amino-acid polypeptide reads, in one-letter code: Heparan sulfate glucosamine 3-O-sulfotransferase 3B1 (390 aa).

The interval 1 to 25 (MGQRLSGGRSCLDVPGRFLPQPPPP) is disordered. The Cytoplasmic segment spans residues 1-32 (MGQRLSGGRSCLDVPGRFLPQPPPPPPPVRRK). Residues 33–53 (LALLFAMLCIWLYMFLYSCAG) form a helical; Signal-anchor for type II membrane protein membrane-spanning segment. Residues 54-390 (SCTAAPGLLL…QMTGRDFGWD (337 aa)) lie on the Lumenal side of the membrane. Residues 79 to 125 (TAPNETSPKMPFRAPPANSLAAGKDKTVGAGSQEEQSPEAPDSPSPI) are disordered. Asn82 is a glycosylation site (N-linked (GlcNAc...) asparagine). 147–151 (KGGTR) serves as a coordination point for 3'-phosphoadenylyl sulfate. Residues 169–175 (EPHFFDR) and 200–203 (KTPS) contribute to the substrate site. 3'-phosphoadenylyl sulfate is bound by residues Arg228 and Ser236. N-linked (GlcNAc...) asparagine glycosylation occurs at Asn258. 268–269 (WS) serves as a coordination point for substrate. Asn329 carries an N-linked (GlcNAc...) asparagine glycan. Cys336 and Cys348 are oxidised to a cystine. 353-357 (KGRAH) lines the 3'-phosphoadenylyl sulfate pocket.

The protein belongs to the sulfotransferase 1 family.

The protein localises to the golgi apparatus membrane. The catalysed reaction is alpha-D-glucosaminyl-[heparan sulfate](n) + 3'-phosphoadenylyl sulfate = 3-sulfo-alpha-D-glucosaminyl-[heparan sulfate](n) + adenosine 3',5'-bisphosphate + H(+). In terms of biological role, sulfotransferase that utilizes 3'-phospho-5'-adenylyl sulfate (PAPS) to catalyze the transfer of a sulfo group to an N-unsubstituted glucosamine linked to a 2-O-sulfo iduronic acid unit on heparan sulfate. Catalyzes the O-sulfation of glucosamine in IdoUA2S-GlcNS and also in IdoUA2S-GlcNH2. Unlike HS3ST1/3-OST-1, does not convert non-anticoagulant heparan sulfate to anticoagulant heparan sulfate. This Mus musculus (Mouse) protein is Heparan sulfate glucosamine 3-O-sulfotransferase 3B1 (Hs3st3b1).